The chain runs to 739 residues: AN1-type zinc finger protein 4 (739 aa).

The 76-residue stretch at 54-129 (MELFIETLTG…LKLVLAMRGG (76 aa)) folds into the Ubiquitin-like domain. Over residues 246–255 (KPKKVVKVKP) the composition is skewed to basic residues. Disordered regions lie at residues 246–270 (KPKK…STAA) and 287–316 (LPSG…RPVS). The AN1-type zinc finger occupies 673-720 (KKIMKHCFLCGKKTGLATSFECRCGNNFCASHRYAEAHGCTYDYKSAG). Residues Cys679, Cys682, Cys694, Cys696, Cys701, His704, His710, and Cys712 each contribute to the Zn(2+) site.

In Mus musculus (Mouse), this protein is AN1-type zinc finger protein 4 (Zfand4).